The chain runs to 329 residues: Phosphate acyltransferase (329 aa).

Belongs to the PlsX family. As to quaternary structure, homodimer. Probably interacts with PlsY.

The protein localises to the cytoplasm. It carries out the reaction a fatty acyl-[ACP] + phosphate = an acyl phosphate + holo-[ACP]. The protein operates within lipid metabolism; phospholipid metabolism. Functionally, catalyzes the reversible formation of acyl-phosphate (acyl-PO(4)) from acyl-[acyl-carrier-protein] (acyl-ACP). This enzyme utilizes acyl-ACP as fatty acyl donor, but not acyl-CoA. This chain is Phosphate acyltransferase, found in Campylobacter concisus (strain 13826).